The sequence spans 407 residues: Nicotinate phosphoribosyltransferase (407 aa).

The residue at position 224 (H224) is a Phosphohistidine; by autocatalysis.

It belongs to the NAPRTase family. In terms of processing, transiently phosphorylated on a His residue during the reaction cycle. Phosphorylation strongly increases the affinity for substrates and increases the rate of nicotinate D-ribonucleotide production. Dephosphorylation regenerates the low-affinity form of the enzyme, leading to product release.

The catalysed reaction is nicotinate + 5-phospho-alpha-D-ribose 1-diphosphate + ATP + H2O = nicotinate beta-D-ribonucleotide + ADP + phosphate + diphosphate. The protein operates within cofactor biosynthesis; NAD(+) biosynthesis; nicotinate D-ribonucleotide from nicotinate: step 1/1. In terms of biological role, catalyzes the synthesis of beta-nicotinate D-ribonucleotide from nicotinate and 5-phospho-D-ribose 1-phosphate at the expense of ATP. This is Nicotinate phosphoribosyltransferase from Pseudomonas syringae pv. tomato (strain ATCC BAA-871 / DC3000).